The primary structure comprises 509 residues: MNNEEDLLQEDSTRDEGNETEANSMNTLRRTRKKVTKPYVCSTEVGETDMSNSNDCMRDSSQILTPPQLSSRMKHIRQAMAKNRLQFVRFEATDLHGVSRSKTIPAHFFQEKVSHGVCMPRGYLEVIPNPKDNEMNNIRATCFNSDIVLMPELSTFRVLPWADRTARVICDTFTVTGEPLLTSPRYIAKRQLSHLQASGFSLLSAFIYDFCIFGVPEILNSKIISFPALTFLNNHDQPFMQELVDGLYHTGANVESFSSSTRPGQMEISFLPEFGISSADNAFTLRTGVKEVARKYNYIASFFIETGFCDSGILSHSLWDVDRKKNMFCSTSGTEQLTITGKKWLAGLLKHSAALSCLMAPSVSCRKRYSKDRKDLKKSVPTTWGYNDNSCIFNIKCHGEKGTRIENKLGSATANPYLVLAATVAAGLDGLHSSNEVLAGPDESTDFYQVEPSEIPLKLEDALVALEEDQCLRQALGETFIRYFVAMKKYELENEEIAAERNKFLEYFI.

Residues Met1–Lys34 form a disordered region. One can recognise a GS beta-grasp domain in the interval Asn83 to Gly177. The region spanning Pro184–Ile509 is the GS catalytic domain.

This sequence belongs to the glutamine synthetase family. Dodecamer. Interacts with BFSP2 and VIM. Abundantly expressed in lens.

In terms of biological role, may act as a component of the cytoskeleton or as a chaperone for the reorganization of intermediate filament proteins during terminal differentiation in the lens. Does not seem to have enzymatic activity. The chain is Lengsin (LGSN) from Homo sapiens (Human).